Here is an 821-residue protein sequence, read N- to C-terminus: Condensin-2 complex subunit kle-2 (821 aa).

The interval 389–426 is disordered; sequence VMQNDEPNTSRRPDENYAPMDFDDDFGGGGDDDDDDYI. The span at 409-424 shows a compositional bias: acidic residues; it reads DFDDDFGGGGDDDDDD. Positions 529 to 561 form a coiled coil; sequence TAILAEKKRRIKEKTAKIREARIQNMQRKRTAR.

This sequence belongs to the CND2 H2 (condensin-2 subunit 2) family. In terms of assembly, component of the condensin II complex, which contains the mix-1/SMC2 and smc-4/SMC4 heterodimer, and three non SMC subunits, capg-2, kle-2 and hcp-6 that probably regulate the complex. Within the complex, interacts with mix-1, smc-4, capg-2 and hcp-6.

It localises to the nucleus. It is found in the chromosome. Its subcellular location is the centromere. Regulatory subunit of the condensin II complex, a complex that seems to play a role in prophase chromosome condensation and in chromosome segregation in mitosis and in meiosis. The protein is Condensin-2 complex subunit kle-2 (kle-2) of Caenorhabditis elegans.